The chain runs to 394 residues: Cytohesin-4 (394 aa).

The stretch at 12–65 (SSGETEELQRIKWHRKQLLEDIQKLKDEIADVFAQIDCFESAEESRMAQKEKEL) forms a coiled coil. The SEC7 domain maps to 54 to 241 (EESRMAQKEK…RNLFDSIKSE (188 aa)). Positions 259 to 375 (NPDREGWLLK…WIESIRASIT (117 aa)) constitute a PH domain. A 1,2-diacyl-sn-glycero-3-phospho-(1D-myo-inositol-3,4,5-trisphosphate) is bound by residues 268 to 275 (KLGGRVKT), Arg-279, Tyr-290, and Arg-300. Residues 386-394 (RKKKIASKQ) are C-terminal autoinhibitory region.

As to expression, expressed predominantly in peripheral blood leukocytes.

It localises to the cell membrane. Functionally, promotes guanine-nucleotide exchange on ARF1 and ARF5. Promotes the activation of ARF factors through replacement of GDP with GTP. This Homo sapiens (Human) protein is Cytohesin-4 (CYTH4).